We begin with the raw amino-acid sequence, 249 residues long: Phosphoribosylaminoimidazole-succinocarboxamide synthase (249 aa).

Belongs to the SAICAR synthetase family.

It catalyses the reaction 5-amino-1-(5-phospho-D-ribosyl)imidazole-4-carboxylate + L-aspartate + ATP = (2S)-2-[5-amino-1-(5-phospho-beta-D-ribosyl)imidazole-4-carboxamido]succinate + ADP + phosphate + 2 H(+). The protein operates within purine metabolism; IMP biosynthesis via de novo pathway; 5-amino-1-(5-phospho-D-ribosyl)imidazole-4-carboxamide from 5-amino-1-(5-phospho-D-ribosyl)imidazole-4-carboxylate: step 1/2. This chain is Phosphoribosylaminoimidazole-succinocarboxamide synthase, found in Roseiflexus castenholzii (strain DSM 13941 / HLO8).